Consider the following 213-residue polypeptide: KHG/KDPG aldolase (213 aa).

Catalysis depends on glutamate 45, which acts as the Proton acceptor. Pyruvate contacts are provided by arginine 49, threonine 73, and lysine 133. The active-site Schiff-base intermediate with substrate is lysine 133.

Belongs to the KHG/KDPG aldolase family. As to quaternary structure, homotrimer.

The protein resides in the cytoplasm. It catalyses the reaction 2-dehydro-3-deoxy-6-phospho-D-gluconate = D-glyceraldehyde 3-phosphate + pyruvate. The enzyme catalyses (4S)-4-hydroxy-2-oxoglutarate = glyoxylate + pyruvate. It functions in the pathway carbohydrate acid metabolism; 2-dehydro-3-deoxy-D-gluconate degradation; D-glyceraldehyde 3-phosphate and pyruvate from 2-dehydro-3-deoxy-D-gluconate: step 2/2. Its pathway is carbohydrate metabolism; glyoxylate and dicarboxylate metabolism. Functionally, involved in the degradation of glucose via the Entner-Doudoroff pathway. Catalyzes the reversible, stereospecific retro-aldol cleavage of 2-keto-3-deoxy-6-phosphogluconate (KDPG) to pyruvate and D-glyceraldehyde-3-phosphate. In addition to its KDPG aldolase activity, catalyzes the reversible cleavage of 2-keto-4-hydroxyglutarate (KHG) to glyoxylate and pyruvate. The enzyme is stereoselective for the S-enantiomer of KHG. Cleavage of KHG could serve in tricarboxylic acid (TCA) cycle regulation or, when operating in the reverse direction, in the detoxification of glyoxylate. The protein is KHG/KDPG aldolase (eda) of Escherichia coli O157:H7.